The sequence spans 401 residues: Nodal homolog 3-A (401 aa).

The N-terminal stretch at 1–18 (MAFLNLFFCLVFISPLMA) is a signal peptide. A propeptide spanning residues 19-274 (MPPVLQGRKS…KVNGFRRLRR (256 aa)) is cleaved from the precursor. 4 N-linked (GlcNAc...) asparagine glycosylation sites follow: asparagine 168, asparagine 337, asparagine 341, and asparagine 344. 2 disulfide bridges follow: cysteine 299–cysteine 365 and cysteine 328–cysteine 396.

The protein belongs to the TGF-beta family. As to quaternary structure, monomer. The propeptide region interacts with bmp4 in a non-covalent manner. As to expression, expressed in the epithelial layer of the Spemann organizer during gastrulation.

It localises to the secreted. Exhibits mesoderm-dorsalizing activity and neural-inducing activity, but lacks mesoderm-inducing activity. Regulates the expression of specific mesodermal and neural genes. Induces convergent extension movements at the embryonic midline by activating the fgf signaling pathway to induce t/bra expression in the organizer region. Acts with wnt11 to induce Spemann organizer cells and induce axis formation. The unprocessed protein antagonizes bmp-signaling. The sequence is that of Nodal homolog 3-A (nodal3-a) from Xenopus laevis (African clawed frog).